Consider the following 149-residue polypeptide: Sex-regulated protein janus-A (149 aa).

Lys-46 lines the substrate pocket. His-77 acts as the Proton acceptor in catalysis. Substrate is bound at residue 118–120; the sequence is STG.

It belongs to the janus family.

Its function is as follows. JanA and janB regulate somatic sex differentiation. This chain is Sex-regulated protein janus-A (janA), found in Drosophila pseudoobscura pseudoobscura (Fruit fly).